A 729-amino-acid chain; its full sequence is MDDLTLLDLLECPVCFEKLDVTAKVLPCQHTFCKPCLQRVFKAHKELRCPECRTPVFSNIEALPANLLLVRLLDGVRSGQSSGRGGSFRRPGTMTLQDGRKSRTNPRRLQASPFRLVPNVRIHMDGVPRAKALCNYRGQNPGDLRFNKGDIILLRRQLDENWYQGEINGISGNFPASSVEVIKQLPQPPPLCRALYNFDLRGKDKSENQDCLTFLKDDIITVISRVDENWAEGKLGDKVGIFPILFVEPNLTARHLLEKNKGRQSSRTKNLSLVSSSSRGNTSTLRRGPGSRRKVPGQFSITTALNTLNRMVHSPSGRHMVEISTPVLISSSNPSVITQPMEKADVPSSCVGQVSTYHPAPVSPGHSTAVVSLPGSQQHLSANMFVALHSYSAHGPDELDLQKGEGVRVLGKCQDGWLRGVSLVTGRVGIFPNNYVIPIFRKTSSFPDSRSPGLYTTWTLSTSSVSSQGSISEGDPRQSRPFKSVFVPTAIVNPVRSTAGPGTLGQGSLRKGRSSMRKNGSLQRPLQSGIPTLVVGSLRRSPTMVLRPQQFQFYQPQGIPSSPSAVVVEMGSKPALTGEPALTCISRGSEAWIHSAASSLIMEDKEIPIKSEPLPKPPASAPPSILVKPENSRNGIEKQVKTVRFQNYSPPPTKHYTSHPTSGKPEQPATLKASQPEAASLGPEMTVLFAHRSGCHSGQQTDLRRKSALGKATTLVSTASGTQTVFPSK.

The RING-type zinc finger occupies 12 to 53 (CPVCFEKLDVTAKVLPCQHTFCKPCLQRVFKAHKELRCPECR). The tract at residues 78 to 105 (SGQSSGRGGSFRRPGTMTLQDGRKSRTN) is disordered. 2 SH3 domains span residues 125-184 (DGVP…VIKQ) and 187-252 (QPPP…PNLT). The interval 258-297 (EKNKGRQSSRTKNLSLVSSSSRGNTSTLRRGPGSRRKVPG) is disordered. Residues 263–285 (RQSSRTKNLSLVSSSSRGNTSTL) show a composition bias toward polar residues. The segment at 370–459 (VVSLPGSQQH…RSPGLYTTWT (90 aa)) is interaction with PAK4. The SH3 3 domain occupies 380–441 (LSANMFVALH…PNNYVIPIFR (62 aa)). Disordered regions lie at residues 497-526 (STAGPGTLGQGSLRKGRSSMRKNGSLQRPL) and 610-677 (KSEP…SQPE). A compositionally biased stretch (polar residues) spans 517 to 526 (RKNGSLQRPL). Residues 641–646 (KTVRFQ) form an interaction with PPP1CA region. Serine 649 carries the post-translational modification Phosphoserine.

Belongs to the SH3RF family. Interacts with FASLG and PPP1CA. Interacts with PAK4 and TNFRSF1A. Interacts with DLK1, MAP3K10/MLK2, MAPK8IP1/JIP1, MAPK8IP2/JIP2 and MAPK8IP3/JIP3. Interacts with RAC1 (both active GTP- or inactive GDP-bound forms). Post-translationally, autoubiquitinated. In terms of tissue distribution, heart (at protein level). Up-regulated in colon cancer tissues as compared to normal colon tissues (at protein level). Testis. In the heart, present in the apex, left atrium, right atrium, left ventricle and right ventricle, but not in the aorta.

The protein localises to the nucleus. The catalysed reaction is S-ubiquitinyl-[E2 ubiquitin-conjugating enzyme]-L-cysteine + [acceptor protein]-L-lysine = [E2 ubiquitin-conjugating enzyme]-L-cysteine + N(6)-ubiquitinyl-[acceptor protein]-L-lysine.. It participates in protein modification; protein ubiquitination. Functionally, has E3 ubiquitin-protein ligase activity. Acts as an anti-apoptotic regulator of the JNK pathway by ubiquitinating and promoting the degradation of SH3RF1, a scaffold protein that is required for pro-apoptotic JNK activation. Facilitates TNF-alpha-mediated recruitment of adapter proteins TRADD and RIPK1 to TNFRSF1A and regulates PAK4 protein stability via inhibition of its ubiquitin-mediated proteasomal degradation. Inhibits PPP1CA phosphatase activity. The chain is E3 ubiquitin-protein ligase SH3RF2 (SH3RF2) from Homo sapiens (Human).